The primary structure comprises 508 residues: Probable monogalactosyldiacylglycerol synthase 3, chloroplastic (508 aa).

The N-terminal 60 residues, 1–60 (MAASSSSSSSMASPRGRSIRETVLETVAAYHQQQRMRRKFRKSLSYAGELSSAGRARGEG), are a transit peptide targeting the chloroplast. A disordered region spans residues 51-79 (SSAGRARGEGGASSSASTTSLCGPDEDDE).

This sequence belongs to the glycosyltransferase 28 family.

The protein resides in the plastid. It is found in the chloroplast membrane. The enzyme catalyses a 1,2-diacyl-sn-glycerol + UDP-alpha-D-galactose = a 1,2-diacyl-3-O-(beta-D-galactosyl)-sn-glycerol + UDP + H(+). Functionally, involved in the synthesis of the major structural component of photosynthetic membranes. The polypeptide is Probable monogalactosyldiacylglycerol synthase 3, chloroplastic (MGD3) (Oryza sativa subsp. japonica (Rice)).